A 264-amino-acid polypeptide reads, in one-letter code: NAD kinase 1 (264 aa).

Aspartate 45 (proton acceptor) is an active-site residue. NAD(+)-binding positions include 45-46, 122-123, arginine 148, aspartate 150, 161-166, and alanine 185; these read DG, NE, and TAYNKS.

It belongs to the NAD kinase family. A divalent metal cation serves as cofactor.

Its subcellular location is the cytoplasm. The catalysed reaction is NAD(+) + ATP = ADP + NADP(+) + H(+). Involved in the regulation of the intracellular balance of NAD and NADP, and is a key enzyme in the biosynthesis of NADP. Catalyzes specifically the phosphorylation on 2'-hydroxyl of the adenosine moiety of NAD to yield NADP. This Listeria innocua serovar 6a (strain ATCC BAA-680 / CLIP 11262) protein is NAD kinase 1.